Here is a 162-residue protein sequence, read N- to C-terminus: Ribosomal RNA large subunit methyltransferase H (162 aa).

S-adenosyl-L-methionine is bound by residues Leu78, Gly109, and 128-133 (LSALTL).

The protein belongs to the RNA methyltransferase RlmH family. Homodimer.

It is found in the cytoplasm. It catalyses the reaction pseudouridine(1915) in 23S rRNA + S-adenosyl-L-methionine = N(3)-methylpseudouridine(1915) in 23S rRNA + S-adenosyl-L-homocysteine + H(+). In terms of biological role, specifically methylates the pseudouridine at position 1915 (m3Psi1915) in 23S rRNA. The protein is Ribosomal RNA large subunit methyltransferase H of Psychrobacter cryohalolentis (strain ATCC BAA-1226 / DSM 17306 / VKM B-2378 / K5).